The sequence spans 206 residues: 3-demethoxyubiquinol 3-hydroxylase (206 aa).

Positions 55, 85, 88, 137, 169, and 172 each coordinate Fe cation.

The protein belongs to the COQ7 family. Requires Fe cation as cofactor.

It localises to the cell membrane. It catalyses the reaction a 5-methoxy-2-methyl-3-(all-trans-polyprenyl)benzene-1,4-diol + AH2 + O2 = a 3-demethylubiquinol + A + H2O. It functions in the pathway cofactor biosynthesis; ubiquinone biosynthesis. In terms of biological role, catalyzes the hydroxylation of 2-nonaprenyl-3-methyl-6-methoxy-1,4-benzoquinol during ubiquinone biosynthesis. The sequence is that of 3-demethoxyubiquinol 3-hydroxylase from Laribacter hongkongensis (strain HLHK9).